The sequence spans 474 residues: E3 ubiquitin-protein ligase rnf168 (474 aa).

The span at 1 to 12 (MPPVSEVDRGPV) shows a compositional bias: basic and acidic residues. Positions 1-20 (MPPVSEVDRGPVEESSGGLK) are disordered. An RING-type zinc finger spans residues 26–65 (CPVCLEIFLEPVTLPCMHTFCKPCFLETVDKSNMCCPLCR). The short motif at 119–137 (VCQPGELRKEYEDQISKLV) is the LR motif 1 element. The UMI motif signature appears at 152–160 (EEYIQRLLA). The MIU motif 1 signature appears at 174 to 195 (EEQQLENDEKLARLLSLELNSG). A compositionally biased stretch (polar residues) spans 192-203 (LNSGPASESTCN). Disordered stretches follow at residues 192–259 (LNSG…KPLS) and 367–474 (IQKE…NMGS). The segment covering 233–243 (PSSSDSSPDSS) has biased composition (low complexity). The short motif at 353–376 (RWQQEEEDRRLALRIQKELDRENS) is the MIU motif 2 element. The span at 367–383 (IQKELDRENSVDRRKGS) shows a compositional bias: basic and acidic residues. Residues 379-390 (RRKGSADSYQLR) carry the LR motif 2 motif. Polar residues-rich tracts occupy residues 385–402 (DSYQ…TTSP) and 409–418 (KGSNTTTAKN). A compositionally biased stretch (basic and acidic residues) spans 422-432 (RRGEEKTEKRL). Over residues 443 to 457 (VKTPVSSTAVSSTVK) the composition is skewed to low complexity.

It belongs to the RNF168 family. In terms of assembly, monomer.

It localises to the nucleus. The enzyme catalyses S-ubiquitinyl-[E2 ubiquitin-conjugating enzyme]-L-cysteine + [acceptor protein]-L-lysine = [E2 ubiquitin-conjugating enzyme]-L-cysteine + N(6)-ubiquitinyl-[acceptor protein]-L-lysine.. It participates in protein modification; protein ubiquitination. In terms of biological role, E3 ubiquitin-protein ligase required for accumulation of repair proteins to sites of DNA damage. Acts with ube2n/ubc13 to amplify the rnf8-dependent histone ubiquitination. Recruited to sites of DNA damage at double-strand breaks (DSBs) by binding to ubiquitinated histone H2A and ubiquitinates histone H2A and H2AX, leading to amplify the rnf8-dependent H2A ubiquitination and promoting the formation of 'Lys-63'-linked ubiquitin conjugates. This leads to concentrate ubiquitinated histones H2A and H2AX at DNA lesions. Catalyzes monoubiquitination of 'Lys-13' and 'Lys-15' of nucleosomal histone H2A (H2AK13Ub and H2AK15Ub, respectively). The sequence is that of E3 ubiquitin-protein ligase rnf168 from Danio rerio (Zebrafish).